The chain runs to 50 residues: Protein PsbN (50 aa).

Residues 14–34 (VAVTILAILLALTGFGLWTAF) traverse the membrane as a helical segment.

This sequence belongs to the PsbN family.

The protein localises to the cellular thylakoid membrane. In terms of biological role, may play a role in photosystem I and II biogenesis. The chain is Protein PsbN from Prochlorococcus marinus (strain MIT 9312).